A 314-amino-acid chain; its full sequence is Ribosomal RNA large subunit methyltransferase F (314 aa).

It belongs to the methyltransferase superfamily. METTL16/RlmF family.

It localises to the cytoplasm. It catalyses the reaction adenosine(1618) in 23S rRNA + S-adenosyl-L-methionine = N(6)-methyladenosine(1618) in 23S rRNA + S-adenosyl-L-homocysteine + H(+). Functionally, specifically methylates the adenine in position 1618 of 23S rRNA. The polypeptide is Ribosomal RNA large subunit methyltransferase F (Flavobacterium psychrophilum (strain ATCC 49511 / DSM 21280 / CIP 103535 / JIP02/86)).